A 357-amino-acid chain; its full sequence is RNA 3'-terminal phosphate cyclase (357 aa).

ATP-binding positions include Q102 and 293-296; that span reads HMGD. Residue H319 is the Tele-AMP-histidine intermediate of the active site.

This sequence belongs to the RNA 3'-terminal cyclase family. Type 1 subfamily.

The protein localises to the cytoplasm. The catalysed reaction is a 3'-end 3'-phospho-ribonucleotide-RNA + ATP = a 3'-end 2',3'-cyclophospho-ribonucleotide-RNA + AMP + diphosphate. Functionally, catalyzes the conversion of 3'-phosphate to a 2',3'-cyclic phosphodiester at the end of RNA. The mechanism of action of the enzyme occurs in 3 steps: (A) adenylation of the enzyme by ATP; (B) transfer of adenylate to an RNA-N3'P to produce RNA-N3'PP5'A; (C) and attack of the adjacent 2'-hydroxyl on the 3'-phosphorus in the diester linkage to produce the cyclic end product. The biological role of this enzyme is unknown but it is likely to function in some aspects of cellular RNA processing. This chain is RNA 3'-terminal phosphate cyclase, found in Desulfurococcus amylolyticus (strain DSM 18924 / JCM 16383 / VKM B-2413 / 1221n) (Desulfurococcus kamchatkensis).